The chain runs to 394 residues: Flap endonuclease 1 (394 aa).

Residues 1-104 (MGIKQLFSVI…GELAKRFQRK (104 aa)) form an N-domain region. Residue Asp34 coordinates Mg(2+). The DNA site is built by Arg47 and Arg70. 5 residues coordinate Mg(2+): Asp86, Glu158, Glu160, Asp179, and Asp181. Residues 122–253 (DVEKFSRRTV…STALKLIREH (132 aa)) are I-domain. Glu158 contributes to the DNA binding site. DNA is bound by residues Gly231 and Asp233. Asp233 contacts Mg(2+). An interaction with PCNA region spans residues 341–349 (QQARIEGFF). Basic and acidic residues predominate over residues 356-383 (EEEKKAHKRKLEEQAEQKRKKVKEEKKE). The tract at residues 356–394 (EEEKKAHKRKLEEQAEQKRKKVKEEKKEKAKLKAKPRGA) is disordered. Positions 384–394 (KAKLKAKPRGA) are enriched in basic residues.

This sequence belongs to the XPG/RAD2 endonuclease family. FEN1 subfamily. Interacts with PCNA. Three molecules of dnr-8/fen1 bind to one PCNA trimer with each molecule binding to one PCNA monomer. PCNA stimulates the nuclease activity without altering cleavage specificity. It depends on Mg(2+) as a cofactor. In terms of processing, phosphorylated. Phosphorylation upon DNA damage induces relocalization to the nuclear plasma.

The protein resides in the nucleus. Its subcellular location is the nucleolus. The protein localises to the nucleoplasm. It is found in the mitochondrion. Functionally, structure-specific nuclease with 5'-flap endonuclease and 5'-3' exonuclease activities involved in DNA replication and repair. During DNA replication, cleaves the 5'-overhanging flap structure that is generated by displacement synthesis when DNA polymerase encounters the 5'-end of a downstream Okazaki fragment. It enters the flap from the 5'-end and then tracks to cleave the flap base, leaving a nick for ligation. Also involved in the long patch base excision repair (LP-BER) pathway, by cleaving within the apurinic/apyrimidinic (AP) site-terminated flap. Acts as a genome stabilization factor that prevents flaps from equilibrating into structures that lead to duplications and deletions. Also possesses 5'-3' exonuclease activity on nicked or gapped double-stranded DNA, and exhibits RNase H activity. Also involved in replication and repair of rDNA and in repairing mitochondrial DNA. The sequence is that of Flap endonuclease 1 (dnr-8) from Neurospora crassa (strain ATCC 24698 / 74-OR23-1A / CBS 708.71 / DSM 1257 / FGSC 987).